Reading from the N-terminus, the 169-residue chain is 6,7-dimethyl-8-ribityllumazine synthase (169 aa).

Residues phenylalanine 24, 58–60 (ALE), and 82–84 (AVI) each bind 5-amino-6-(D-ribitylamino)uracil. 87-88 (ET) contributes to the (2S)-2-hydroxy-3-oxobutyl phosphate binding site. Histidine 90 serves as the catalytic Proton donor. Asparagine 115 is a 5-amino-6-(D-ribitylamino)uracil binding site. Position 129 (arginine 129) interacts with (2S)-2-hydroxy-3-oxobutyl phosphate.

The protein belongs to the DMRL synthase family.

It carries out the reaction (2S)-2-hydroxy-3-oxobutyl phosphate + 5-amino-6-(D-ribitylamino)uracil = 6,7-dimethyl-8-(1-D-ribityl)lumazine + phosphate + 2 H2O + H(+). It functions in the pathway cofactor biosynthesis; riboflavin biosynthesis; riboflavin from 2-hydroxy-3-oxobutyl phosphate and 5-amino-6-(D-ribitylamino)uracil: step 1/2. Its function is as follows. Catalyzes the formation of 6,7-dimethyl-8-ribityllumazine by condensation of 5-amino-6-(D-ribitylamino)uracil with 3,4-dihydroxy-2-butanone 4-phosphate. This is the penultimate step in the biosynthesis of riboflavin. This chain is 6,7-dimethyl-8-ribityllumazine synthase, found in Burkholderia vietnamiensis (strain G4 / LMG 22486) (Burkholderia cepacia (strain R1808)).